The primary structure comprises 666 residues: MSSFLVQTAVVRLFLLGVVFWFPFALSSSCAEIASKFGTWKSEGDAPPSYLSPTVDLLDGLDRIRKKIINGTISSQYDFDNLLHRLISQANDGHLQIGLCSREIFRFQHGTPLTSVSRDGLDLPQLYVHSDAVIMHSGQVEAISPVVEINGLEADYYLQSRIAVTLGYQDPDARYNALFPSPSAGFTGTYSAGAWASNSGEWPGSAVLTIRFANGTRLEVKPTATWPATNGPMNYTDGQALFEAACLPGTSSKYIFGSFPGMYLGLPAYELPRSGPSVFPAPTIKDSNGLVRLYSLEDAALQDVAVLQITSFRMGGEDSREFSATIRQSLDWASSHGKTKLLLDLSGNGGGNVIPGFDLFRMLFPDEPIRSETRFRSTELLDVLGQAFSAEYRGADAKEILDPPLAAQNAVSPDQEENVFGSWKDLFGPDPNYEGDSMSNAYAVFSFAAASTTFEPISGYGSAPLAIKTRLFEPQSIAVVTDGRCSSTCAIVVGLLQAQGVRTVTFGGRPRKAPMQAVGGVKGGQRWSLRTISRHIKTARELLAKQYTSTAAQANSTRRLAVGHLLQKLNDLAPPALPLIPRMEDNEWEFALRFDTYGQSSVNFRDAYVPANETTPWQFIYEAADCRMFLTPENVVEPASRWNSAARAMFGGREMGSEKCVDYVSV.

A signal peptide spans methionine 1 to serine 27. Residues asparagine 70, asparagine 214, and asparagine 234 are each glycosylated (N-linked (GlcNAc...) asparagine). The interval aspartate 303 to valine 504 is peptidase S41 domain. Residues asparagine 555 and asparagine 612 are each glycosylated (N-linked (GlcNAc...) asparagine).

Belongs to the peptidase S41A family.

The protein operates within mycotoxin biosynthesis. Peptidase S41 family protein; part of the gene cluster that mediates the biosynthesis of the phomopsins, a group of hexapeptide mycotoxins which infects lupins and causes lupinosis disease in livestock. Within the pathway, phomP1 and phomP1' are probably involved in the processing of the phomA and phomA' precursors. The pathway starts with the processing of the precursor phomA by several endopeptidases including kexin proteases as well as the cluster-specific S41 family peptidase phomP1 and the oligopeptidase phomG to produce 10 identical copies of the hexapeptide Tyr-Val-Ile-Pro-Ile-Asp. After being excised from the precursor peptide, the core peptides are cyclized and modified post-translationally by enzymes encoded within the gene cluster. The timing and order of proteolysis of the phomA precursor and PTMs are still unknown. Two tyrosinase-like enzymes, phomQ1 and phomQ2, catalyze the chlorination and hydroxylation of Tyr, respectively. PhomYb, is proposed to be involved in the construction of the macrocyclic structure. The other 4 ustYa family proteins may be involved in PTMs that generate the unique structure of phomopsin A. PhomYa is required for the hydroxylation of C-beta of Tyr. PhomYc, phomYd, and phomYe are responsible for the biosynthesis of 2,3-dehydroisoleucine (dIle), 2,3-dehydroaspartic acid (dAsp), and 3,4-dehydroproline (dPro), respectively. While dIle formation by phomYc is indispensable for the installation of dAsp by phomYd, the order of the other PTMs have not been elucidated yet. Most of the biosynthetic enzymes likely have broad substrate specificity, and thus, there might be a metabolic grid from a precursor to phomopsin A. The enzyme(s) responsible for the biosynthesis of 3,4-dehydrovaline (dVal) have also not been identified yet. Finally, phomM acts as an S-adenosylmethionine-dependent alpha-N-methyltransferase that catalyzes two successive N-methylation reactions, converting N-desmethyl-phomopsin A to phomopsin A and phomopsin A further to an N,N-dimethylated congener called phomopsin E. The polypeptide is Peptidase S41 family protein phomP1' (Diaporthe leptostromiformis (Lupinosis disease fungus)).